We begin with the raw amino-acid sequence, 360 residues long: Phospho-N-acetylmuramoyl-pentapeptide-transferase (360 aa).

10 helical membrane passes run 26–46, 72–92, 94–114, 132–152, 168–188, 199–219, 236–256, 263–283, 288–308, and 338–358; these read AIVSLLTALFISLWMGPRMIA, PTMGGIMILTAIVVSVLLWAY, SNPYVWCVLVVLVGYGIIGFV, WKYFWMSVIALGVAFALYLAG, VMPQLGLFYVLLAYFVIVGTG, GLAIMPTVFVAAGFALVAWAT, AGELVIVCTAIVGAGLGFLWF, VFMGDVGSLALGGALGIIAVL, FLLVIMGGVFVVETLSVILQV, and VIVRFWIISLMLVLIGLATLK.

Belongs to the glycosyltransferase 4 family. MraY subfamily. The cofactor is Mg(2+).

The protein localises to the cell inner membrane. The catalysed reaction is UDP-N-acetyl-alpha-D-muramoyl-L-alanyl-gamma-D-glutamyl-meso-2,6-diaminopimeloyl-D-alanyl-D-alanine + di-trans,octa-cis-undecaprenyl phosphate = di-trans,octa-cis-undecaprenyl diphospho-N-acetyl-alpha-D-muramoyl-L-alanyl-D-glutamyl-meso-2,6-diaminopimeloyl-D-alanyl-D-alanine + UMP. It participates in cell wall biogenesis; peptidoglycan biosynthesis. Its function is as follows. Catalyzes the initial step of the lipid cycle reactions in the biosynthesis of the cell wall peptidoglycan: transfers peptidoglycan precursor phospho-MurNAc-pentapeptide from UDP-MurNAc-pentapeptide onto the lipid carrier undecaprenyl phosphate, yielding undecaprenyl-pyrophosphoryl-MurNAc-pentapeptide, known as lipid I. The protein is Phospho-N-acetylmuramoyl-pentapeptide-transferase of Citrobacter koseri (strain ATCC BAA-895 / CDC 4225-83 / SGSC4696).